The primary structure comprises 417 residues: UDP-N-acetylglucosamine 1-carboxyvinyltransferase (417 aa).

22–23 (KN) is a binding site for phosphoenolpyruvate. Position 93 (Arg-93) interacts with UDP-N-acetyl-alpha-D-glucosamine. Catalysis depends on Cys-117, which acts as the Proton donor. 2-(S-cysteinyl)pyruvic acid O-phosphothioketal is present on Cys-117. UDP-N-acetyl-alpha-D-glucosamine contacts are provided by Asp-304 and Ile-326.

The protein belongs to the EPSP synthase family. MurA subfamily.

Its subcellular location is the cytoplasm. The enzyme catalyses phosphoenolpyruvate + UDP-N-acetyl-alpha-D-glucosamine = UDP-N-acetyl-3-O-(1-carboxyvinyl)-alpha-D-glucosamine + phosphate. Its pathway is cell wall biogenesis; peptidoglycan biosynthesis. Cell wall formation. Adds enolpyruvyl to UDP-N-acetylglucosamine. The sequence is that of UDP-N-acetylglucosamine 1-carboxyvinyltransferase from Neisseria gonorrhoeae (strain ATCC 700825 / FA 1090).